The primary structure comprises 170 residues: Disulfide bond formation protein B 1 (170 aa).

Over 1–14 the chain is Cytoplasmic; that stretch reads MNDYTLAIRRERRL. A helical transmembrane segment spans residues 15–31; sequence LMLLGWVCIALLAGALY. Residues 32–49 lie on the Periplasmic side of the membrane; sequence LQYVKNEDPCPLCIIQRY. Cys-41 and Cys-44 are oxidised to a cystine. The chain crosses the membrane as a helical span at residues 50-64; it reads FFCAIGIFAFLAAGI. At 65-71 the chain is on the cytoplasmic side; the sequence is RNWRGVW. A helical membrane pass occupies residues 72 to 89; it reads VLELLIAIAAAGGVGTAA. Residues 90–144 are Periplasmic-facing; it reads RHLTIQMNPGFSCGFDTLQPIVDSLPPAQWFPGMFKVAGLCETVYPPIFGILLPG. An intrachain disulfide couples Cys-102 to Cys-130. A helical membrane pass occupies residues 145–163; it reads WSLIGFAVILIAVVASLWR. The Cytoplasmic segment spans residues 164–170; that stretch reads HRRKLVG.

Belongs to the DsbB family.

It is found in the cell inner membrane. Required for disulfide bond formation in some periplasmic proteins. Acts by oxidizing the DsbA protein. The chain is Disulfide bond formation protein B 1 from Burkholderia lata (strain ATCC 17760 / DSM 23089 / LMG 22485 / NCIMB 9086 / R18194 / 383).